The following is a 522-amino-acid chain: DNA primase DnaG (522 aa).

Positions 171–257 (DAIIILEGRA…CVEDLVQKEI (87 aa)) constitute a Toprim domain. The Mg(2+) site is built by E177, D219, and D221.

The protein belongs to the archaeal DnaG primase family. As to quaternary structure, forms a ternary complex with MCM helicase and DNA. Component of the archaeal exosome complex. The cofactor is Mg(2+).

The catalysed reaction is ssDNA + n NTP = ssDNA/pppN(pN)n-1 hybrid + (n-1) diphosphate.. RNA polymerase that catalyzes the synthesis of short RNA molecules used as primers for DNA polymerase during DNA replication. Also part of the exosome, which is a complex involved in RNA degradation. Acts as a poly(A)-binding protein that enhances the interaction between heteromeric, adenine-rich transcripts and the exosome. This is DNA primase DnaG from Methanosarcina mazei (strain ATCC BAA-159 / DSM 3647 / Goe1 / Go1 / JCM 11833 / OCM 88) (Methanosarcina frisia).